The following is a 366-amino-acid chain: Ubiquitin carboxyl-terminal hydrolase 46 (366 aa).

Residues 35-365 (FGLVNFGNTC…SGYILFYQSR (331 aa)) enclose the USP domain. Cys44 acts as the Nucleophile in catalysis. Residues Cys182, Cys185, Cys229, and Cys232 each contribute to the Zn(2+) site. The Proton acceptor role is filled by His313.

It belongs to the peptidase C19 family. USP12/USP46 subfamily. In terms of assembly, interacts with WDR48. Interacts with WDR20. Interacts with DMWD. Component of the USP46/WDR20/WDR48 deubiquitinating complex. Broadly expressed.

The protein resides in the cytoplasm. It carries out the reaction Thiol-dependent hydrolysis of ester, thioester, amide, peptide and isopeptide bonds formed by the C-terminal Gly of ubiquitin (a 76-residue protein attached to proteins as an intracellular targeting signal).. Activated by interaction with WDR48. Deubiquitinating enzyme that plays a role in behavior, possibly by regulating GABA action. May act by mediating the deubiquitination of GAD1/GAD67. Has almost no deubiquitinating activity by itself and requires the interaction with WDR48 to have a high activity. Not involved in deubiquitination of monoubiquitinated FANCD2. This is Ubiquitin carboxyl-terminal hydrolase 46 (USP46) from Homo sapiens (Human).